The chain runs to 66 residues: Cold shock protein CspB (66 aa).

Positions 4-63 constitute a CSD domain; it reads GKVKWFNNEKGYGFIEVEGGSDVFVHFTAIQGEGFKSLEEGQEVSFEIVQGNRGPQAANV.

In terms of assembly, homodimer.

It is found in the cytoplasm. In terms of biological role, affects cell viability at low temperatures. This is Cold shock protein CspB (cspB) from Geobacillus stearothermophilus (Bacillus stearothermophilus).